We begin with the raw amino-acid sequence, 831 residues long: MTDNQEIKPKKLTLGNSKLSLNKSFDSLTGAQSFVNAKSKTLVEVRKSSTGSATTLSLNKERNSLDQTVIDANKEEFNRRLSILKKAAEQSQLNDPLKISTLSKLASINQSANSKIEPLETDKEVEQKQQNTEENKVEVSAKIVQDDEDIPSQIPKKKEETFVKSPLVGKRTRYGIESEKELDKTAESKIIAPKIKLEEPKKFKKADLFNMLSDDESGSGRTRSLAAIKRAREKEKRKLVSQAPEKVYREVTIPEAIGVGDLANAMSERVADVIKELMKLGILANASQTIDADTAELVATNLGHTVKRVQESDVENVLISDDKVEDLRTRAPVVTVMGHVDHGKTSLLDSLKSTDIAAGELGGITQHIGAYRVTLADGRAITFIDTPGHEAFSEMRSRGAKVTDIVIIVVAADDGIKTQTVEAINHAKAAGVPIIVAINKIDKPDIDIERVKNELYVHEIIGEEAGGDIMIIPISALKKINLDKLEEAILLIAEMQDLKANPFGSAAGVVIESKIEQGRGTLTTILVQRGTLRNSDIIIAGTAYGKVKKMTNDKGLEIVEATPSVPVEIQGLNEVPFAGDKFNVVQNEKQAKDIAEYRMRLAKEKKISIAPRSSLEDLFLKASGNSKIKELPLIIKGDVQGSVEAISGSLLKLPSDEIKLRILHSGVGPITESDVSLAHASSAIIVGFNVRAGANALTAAEKEKVDIRYYSIIYHLIDDIKAIMSGMLDPIVREQYIGSAEMRQIFNITKVGKIAGSYVTKGIIKKGAGVRLLRDNVVIHEGKLKTLKRFKDEVKEVREGYECGIAFENYQDIREGDTVEVFELIQEQRQL.

The segment at 116-157 is disordered; sequence IEPLETDKEVEQKQQNTEENKVEVSAKIVQDDEDIPSQIPKK. Over residues 117–139 the composition is skewed to basic and acidic residues; that stretch reads EPLETDKEVEQKQQNTEENKVEV. Residues 329-499 enclose the tr-type G domain; the sequence is TRAPVVTVMG…LLIAEMQDLK (171 aa). Positions 338-345 are G1; sequence GHVDHGKT. 338 to 345 is a GTP binding site; the sequence is GHVDHGKT. Residues 363–367 form a G2 region; it reads GITQH. A G3 region spans residues 385-388; that stretch reads DTPG. GTP contacts are provided by residues 385 to 389 and 439 to 442; these read DTPGH and NKID. Positions 439 to 442 are G4; sequence NKID. Residues 475-477 are G5; sequence SAL.

It belongs to the TRAFAC class translation factor GTPase superfamily. Classic translation factor GTPase family. IF-2 subfamily.

Its subcellular location is the cytoplasm. Functionally, one of the essential components for the initiation of protein synthesis. Protects formylmethionyl-tRNA from spontaneous hydrolysis and promotes its binding to the 30S ribosomal subunits. Also involved in the hydrolysis of GTP during the formation of the 70S ribosomal complex. The polypeptide is Translation initiation factor IF-2 (Rickettsia conorii (strain ATCC VR-613 / Malish 7)).